Here is a 312-residue protein sequence, read N- to C-terminus: Malate dehydrogenase (312 aa).

NAD(+)-binding positions include 12-17 and Asp-36; that span reads GAGFTG. The substrate site is built by Arg-87 and Arg-93. NAD(+) contacts are provided by residues Asn-100 and 123-125; that span reads LTN. Residue Asn-125 coordinates substrate. At Ser-149 the chain carries Phosphoserine. Arg-156 serves as a coordination point for substrate. His-180 functions as the Proton acceptor in the catalytic mechanism.

Belongs to the LDH/MDH superfamily. MDH type 3 family.

The enzyme catalyses (S)-malate + NAD(+) = oxaloacetate + NADH + H(+). Functionally, catalyzes the reversible oxidation of malate to oxaloacetate. The chain is Malate dehydrogenase from Bacillus cereus (strain ZK / E33L).